Here is a 755-residue protein sequence, read N- to C-terminus: Dynamin-1-like protein (755 aa).

Methionine 1 is subject to N-acetylmethionine. Positions 22–315 constitute a Dynamin-type G domain; it reads IIQLPQIVVV…LMHHIRDCLP (294 aa). Positions 32–39 are G1 motif; the sequence is GTQSSGKS. 32-40 contributes to the GTP binding site; sequence GTQSSGKSS. The interval 58-60 is G2 motif; it reads VTR. The interval 159–162 is G3 motif; that stretch reads DLPG. Residues 228–231 form a G4 motif region; sequence TKLD. GTP-binding positions include 228–234 and 259–262; these read TKLDLMD and NRSQ. Residues 258-261 are G5 motif; it reads VNRS. The tract at residues 357–502 is middle domain; sequence YCNTIEGTAK…NEMVHNLVAI (146 aa). The segment at 461–704 is interaction with GSK3B; it reads NYSTQELLRF…NHVKDTLQSE (244 aa). Residues 515–582 are b domain; it reads ADACGLMNNN…IQDNRRETKN (68 aa). The tract at residues 536–610 is disordered; the sequence is ELPSAVSRDK…QEPTTGNWRG (75 aa). Residue serine 542 is modified to Phosphoserine. Glycyl lysine isopeptide (Lys-Gly) (interchain with G-Cter in SUMO) cross-links involve residues lysine 545 and lysine 548. Low complexity predominate over residues 550–567; the sequence is PSALAPASQEPSPAASAE. Phosphoserine is present on serine 561. Residues 568 to 581 show a composition bias toward basic and acidic residues; that stretch reads ADGKLIQDNRRETK. Glycyl lysine isopeptide (Lys-Gly) (interchain with G-Cter in SUMO) cross-links involve residues lysine 571 and lysine 581. A compositionally biased stretch (gly residues) spans 586-600; sequence AGGGIGDGGRIGDGG. Threonine 604 and threonine 605 each carry an O-linked (GlcNAc) threonine glycan. Residue lysine 613 forms a Glycyl lysine isopeptide (Lys-Gly) (interchain with G-Cter in SUMO) linkage. Position 616 is an N6-acetyllysine; alternate (lysine 616). A Glycyl lysine isopeptide (Lys-Gly) (interchain with G-Cter in SUMO); alternate cross-link involves residue lysine 616. A Glycyl lysine isopeptide (Lys-Gly) (interchain with G-Cter in SUMO) cross-link involves residue lysine 625. Serine 626 is subject to Phosphoserine. Lysine 627 participates in a covalent cross-link: Glycyl lysine isopeptide (Lys-Gly) (interchain with G-Cter in SUMO). Residue serine 635 is modified to Phosphoserine; by CDK1. At serine 656 the chain carries Phosphoserine; by CAMK1 and PKA. Residue cysteine 663 is modified to S-nitrosocysteine. The 92-residue stretch at 663 to 754 folds into the GED domain; sequence CEVIERLIKS…IIAEIRETHL (92 aa). Residues 673–687 are important for homodimerization; sequence YFLIVRKNIQDSVPK.

The protein belongs to the TRAFAC class dynamin-like GTPase superfamily. Dynamin/Fzo/YdjA family. As to quaternary structure, homotetramer; dimerizes through the N-terminal GTP-middle region of one molecule binding to the GED domain of another DNM1L molecule. Oligomerizes in a GTP-dependent manner to form membrane-associated tubules with a spiral pattern. Interacts with GSK3B and MARCHF5. Interacts (via the GTPase and B domains) with UBE2I; the interaction promotes sumoylation of DNM1L, mainly in its B domain. Interacts with PPP3CA; the interaction dephosphorylates DNM1L and regulates its transition to mitochondria. Interacts with BCL2L1 isoform BCL-X(L) and CLTA; DNM1L and BCL2L1 isoform BCL-X(L) may form a complex in synaptic vesicles that also contains clathrin and MFF. Interacts with MFF; the interaction is inhinited by C11orf65/MFI. Interacts with FIS1. Interacts with MIEF2 and MIEF1; GTP-dependent this regulates GTP hydrolysis and DNM1L oligomerization. Interacts with PGAM5; this interaction leads to dephosphorylation at Ser-656 and activation of GTPase activity and eventually to mitochondria fragmentation. Interacts with RALBP1; during mitosis, recruits DNM1L to the mitochondrion and mediates its activation by the mitotic kinase cyclin B-CDK1. Interacts with FUNDC1; this interaction recruits DNM1L/DRP1 at ER-mitochondria contact sites. Post-translationally, phosphorylation/dephosphorylation events on two sites near the GED domain regulate mitochondrial fission. Phosphorylation on Ser-656 by CAMK1 and PKA inhibits the GTPase activity, leading to a defect in mitochondrial fission promoting mitochondrial elongation. Dephosphorylated on this site by PPP3CA which promotes mitochondrial fission. Phosphorylation on Ser-635 by PINK1 activates the GTPase activity and promotes mitochondrial fission. Phosphorylation on Ser-635 by CDK1 also promotes mitochondrial fission. Phosphorylated in a circadian manner at Ser-656. Dephosphorylated by PGAM5. In terms of processing, sumoylated on various lysine residues within the B domain, probably by MUL1. Sumoylation positively regulates mitochondrial fission. Desumoylated by SENP5 during G2/M transition of mitosis. Appears to be linked to its catalytic activity. S-nitrosylation increases DNM1L dimerization, mitochondrial fission and causes neuronal damage. Post-translationally, O-GlcNAcylation augments the level of the GTP-bound active form of DNM1L and induces translocation from the cytoplasm to mitochondria in cardiomyocytes. It also decreases phosphorylation at Ser-656. In terms of processing, ubiquitination by MARCHF5 affects mitochondrial morphology. In terms of tissue distribution, expressed in all tissues tested (at protein level). Longer isoforms are preferentially expressed in brain.

The protein resides in the cytoplasm. The protein localises to the cytosol. It is found in the golgi apparatus. Its subcellular location is the endomembrane system. It localises to the mitochondrion outer membrane. The protein resides in the peroxisome. The protein localises to the membrane. It is found in the clathrin-coated pit. Its subcellular location is the cytoplasmic vesicle. It localises to the secretory vesicle. The protein resides in the synaptic vesicle membrane. It catalyses the reaction GTP + H2O = GDP + phosphate + H(+). Its function is as follows. Functions in mitochondrial and peroxisomal division. Mediates membrane fission through oligomerization into membrane-associated tubular structures that wrap around the scission site to constrict and sever the mitochondrial membrane through a GTP hydrolysis-dependent mechanism. The specific recruitment at scission sites is mediated by membrane receptors like MFF, MIEF1 and MIEF2 for mitochondrial membranes. While the recruitment by the membrane receptors is GTP-dependent, the following hydrolysis of GTP induces the dissociation from the receptors and allows DNM1L filaments to curl into closed rings that are probably sufficient to sever a double membrane. Acts downstream of PINK1 to promote mitochondrial fission in a PRKN-dependent manner. Plays an important role in mitochondrial fission during mitosis. Through its function in mitochondrial division, ensures the survival of at least some types of postmitotic neurons, including Purkinje cells, by suppressing oxidative damage. Required for normal brain development, including that of cerebellum. Facilitates developmentally regulated apoptosis during neural tube formation. Required for a normal rate of cytochrome c release and caspase activation during apoptosis; this requirement may depend upon the cell type and the physiological apoptotic cues. Required for formation of endocytic vesicles. Proposed to regulate synaptic vesicle membrane dynamics through association with BCL2L1 isoform Bcl-X(L) which stimulates its GTPase activity in synaptic vesicles; the function may require its recruitment by MFF to clathrin-containing vesicles. Required for programmed necrosis execution. Rhythmic control of its activity following phosphorylation at Ser-656 is essential for the circadian control of mitochondrial ATP production. The protein is Dynamin-1-like protein of Rattus norvegicus (Rat).